The chain runs to 437 residues: ATP-dependent protease ATPase subunit HslU (437 aa).

ATP contacts are provided by residues V18, 60–65, D250, E315, and R387; that span reads GCGKTE.

This sequence belongs to the ClpX chaperone family. HslU subfamily. A double ring-shaped homohexamer of HslV is capped on each side by a ring-shaped HslU homohexamer. The assembly of the HslU/HslV complex is dependent on binding of ATP.

The protein resides in the cytoplasm. In terms of biological role, ATPase subunit of a proteasome-like degradation complex; this subunit has chaperone activity. The binding of ATP and its subsequent hydrolysis by HslU are essential for unfolding of protein substrates subsequently hydrolyzed by HslV. HslU recognizes the N-terminal part of its protein substrates and unfolds these before they are guided to HslV for hydrolysis. In Methylobacterium radiotolerans (strain ATCC 27329 / DSM 1819 / JCM 2831 / NBRC 15690 / NCIMB 10815 / 0-1), this protein is ATP-dependent protease ATPase subunit HslU.